The chain runs to 177 residues: ATP synthase subunit delta (177 aa).

The protein belongs to the ATPase delta chain family. In terms of assembly, F-type ATPases have 2 components, F(1) - the catalytic core - and F(0) - the membrane proton channel. F(1) has five subunits: alpha(3), beta(3), gamma(1), delta(1), epsilon(1). F(0) has three main subunits: a(1), b(2) and c(10-14). The alpha and beta chains form an alternating ring which encloses part of the gamma chain. F(1) is attached to F(0) by a central stalk formed by the gamma and epsilon chains, while a peripheral stalk is formed by the delta and b chains.

The protein localises to the cell inner membrane. F(1)F(0) ATP synthase produces ATP from ADP in the presence of a proton or sodium gradient. F-type ATPases consist of two structural domains, F(1) containing the extramembraneous catalytic core and F(0) containing the membrane proton channel, linked together by a central stalk and a peripheral stalk. During catalysis, ATP synthesis in the catalytic domain of F(1) is coupled via a rotary mechanism of the central stalk subunits to proton translocation. Its function is as follows. This protein is part of the stalk that links CF(0) to CF(1). It either transmits conformational changes from CF(0) to CF(1) or is implicated in proton conduction. The protein is ATP synthase subunit delta of Yersinia pseudotuberculosis serotype O:1b (strain IP 31758).